We begin with the raw amino-acid sequence, 462 residues long: tRNA(Ile)-lysidine synthase (462 aa).

27–32 (SGGPDS) contributes to the ATP binding site.

This sequence belongs to the tRNA(Ile)-lysidine synthase family.

Its subcellular location is the cytoplasm. It catalyses the reaction cytidine(34) in tRNA(Ile2) + L-lysine + ATP = lysidine(34) in tRNA(Ile2) + AMP + diphosphate + H(+). In terms of biological role, ligates lysine onto the cytidine present at position 34 of the AUA codon-specific tRNA(Ile) that contains the anticodon CAU, in an ATP-dependent manner. Cytidine is converted to lysidine, thus changing the amino acid specificity of the tRNA from methionine to isoleucine. This chain is tRNA(Ile)-lysidine synthase, found in Clostridioides difficile (strain 630) (Peptoclostridium difficile).